We begin with the raw amino-acid sequence, 434 residues long: V-type ATP synthase beta chain (434 aa).

Belongs to the ATPase alpha/beta chains family.

Produces ATP from ADP in the presence of a proton gradient across the membrane. The V-type beta chain is a regulatory subunit. The protein is V-type ATP synthase beta chain of Borrelia garinii subsp. bavariensis (strain ATCC BAA-2496 / DSM 23469 / PBi) (Borreliella bavariensis).